We begin with the raw amino-acid sequence, 351 residues long: Cyanuric acid amidohydrolase (351 aa).

Positions 1–96 are RU A; sequence MPSLRAHVFR…HWTVFARETV (96 aa). Residues Arg53 and 77–78 contribute to the substrate site; that span reads SG. Positions 103 to 240 are RU B; sequence ALAIGVSRTP…HEIIVLGMSA (138 aa). Residue Lys153 is part of the active site. Substrate contacts are provided by residues Arg185 and 223–224; that span reads SS. Ser223 acts as the Nucleophile in catalysis. The RU C stretch occupies residues 246–351; that stretch reads LSIDHAVMLD…PVAIIVEKEQ (106 aa). Glu283 provides a ligand contact to Mg(2+). Substrate is bound by residues Arg310 and 329–330; that span reads SG. Ala332, Gln335, Gly336, Pro337, and Gly340 together coordinate Mg(2+).

This sequence belongs to the cyclic amide hydrolase (CyAH) family. As to quaternary structure, homotetramer.

It carries out the reaction cyanurate + H2O = 1-carboxybiuret + H(+). It functions in the pathway xenobiotic degradation; atrazine degradation; biuret from cyanurate: step 1/1. Its activity is regulated as follows. Inhibited by barbituric acid. Its function is as follows. Responsible for the hydrolysis of cyanuric acid, an intermediate formed during catabolism of s-triazine based compounds in herbicides such as atrazine and polymers such as melamine. Catalyzes the hydrolytic opening of the s-triazine ring of cyanuric acid (2,4,6-trihydroxy-s-triazine) to yield carbon dioxide and carboxybiuret, which spontaneously decarboxylates to biuret. This Rhizobium leguminosarum bv. trifolii (strain WSM1325) protein is Cyanuric acid amidohydrolase.